Reading from the N-terminus, the 208-residue chain is MELSLLNIKGKDTGKKVVLSDDIFAVEPNNHAIYLDVKQYLAHQRQGTHKAKERAEVSFSTKKLKKQKGTGGARAGSRKSPIFVGGGTIFGPRPRTYGFKVNKKVKDLARKSAFSHKLKESNVTVLENFTLNAPKTKDYLAILKDLSLDTKKTLFVIADIDKNIILSSRNLKKAKVVSVDQINTYDLVNADKVVISEGSVSKIEALLN.

The tract at residues 51–79 is disordered; it reads AKERAEVSFSTKKLKKQKGTGGARAGSRK.

The protein belongs to the universal ribosomal protein uL4 family. Part of the 50S ribosomal subunit.

Its function is as follows. One of the primary rRNA binding proteins, this protein initially binds near the 5'-end of the 23S rRNA. It is important during the early stages of 50S assembly. It makes multiple contacts with different domains of the 23S rRNA in the assembled 50S subunit and ribosome. In terms of biological role, forms part of the polypeptide exit tunnel. The chain is Large ribosomal subunit protein uL4 from Cytophaga hutchinsonii (strain ATCC 33406 / DSM 1761 / CIP 103989 / NBRC 15051 / NCIMB 9469 / D465).